A 186-amino-acid polypeptide reads, in one-letter code: T-cell receptor-associated transmembrane adapter 1 (186 aa).

Topologically, residues 1–7 (MSGISGC) are extracellular. Residues 8–28 (PFFLWGLLALLGLALVISLIF) traverse the membrane as a helical; Signal-anchor for type III membrane protein segment. At 29 to 186 (NISHYVEKQR…LIRAKREPIN (158 aa)) the chain is on the cytoplasmic side. Serine 46 carries the phosphoserine modification. Tyrosine 79 is modified (phosphotyrosine). The interval 79–82 (YEQM) is interaction with PIK3R1. The segment at 116-140 (SVKGKRRKPRKQNTHFSDKDGDEQL) is disordered. The segment covering 118 to 128 (KGKRRKPRKQN) has biased composition (basic residues). Basic and acidic residues predominate over residues 131–140 (FSDKDGDEQL).

As to quaternary structure, homodimer; disulfide-linked. Interacts with CD3Z. When phosphorylated, interacts with PIK3R1. In terms of processing, phosphorylated on tyrosines by LCK or FYN upon TCR activation. As to expression, strongly expressed in thymus, and to a lesser extent in spleen, lymph node and peripheral blood lymphocytes. Present in T-cells and NK cells, but not B-cells (at protein level).

The protein localises to the cell membrane. Its function is as follows. Stabilizes the TCR (T-cell antigen receptor)/CD3 complex at the surface of T-cells. The polypeptide is T-cell receptor-associated transmembrane adapter 1 (TRAT1) (Homo sapiens (Human)).